We begin with the raw amino-acid sequence, 98 residues long: Large ribosomal subunit protein bL28 (98 aa).

This sequence belongs to the bacterial ribosomal protein bL28 family.

This chain is Large ribosomal subunit protein bL28, found in Phenylobacterium zucineum (strain HLK1).